Consider the following 370-residue polypeptide: Translocating chain-associated membrane protein 2 (370 aa).

The Cytoplasmic portion of the chain corresponds to 1–22; that stretch reads MAFRRRTKSYPLFSQEFVIHNH. Residues 23 to 43 traverse the membrane as a helical segment; sequence ADIGFCLVLCVLIGLMFEVTA. Residues 44–75 lie on the Extracellular side of the membrane; it reads KTAFLFILPQYNISVPTADSETVHYHYGPKDL. The N-linked (GlcNAc...) asparagine glycan is linked to Asn-55. The helical transmembrane segment at 76-96 threads the bilayer; that stretch reads VTILFYIFITIILHAVVQEYI. Over 97–119 the chain is Cytoplasmic; the sequence is LDKISKRLHLSKVKHSKFNESGQ. A TLC domain is found at 112 to 321; sequence SKFNESGQLV…HSQLRHWREY (210 aa). A helical membrane pass occupies residues 120 to 140; it reads LVVFHFTSVIWCFYVVVTEGY. The Extracellular segment spans residues 141–159; it reads LTNPRSLWEDYPHVHLPFQ. Residues 160 to 180 form a helical membrane-spanning segment; the sequence is VKFFYLCQLAYWLHALPELYF. Residues 181–191 are Cytoplasmic-facing; sequence QKVRKEEIPRQ. Residues 192–209 form a helical membrane-spanning segment; it reads LQYICLYLVHIAGAYLLN. Residues 210-214 are Extracellular-facing; it reads LSRLG. The helical transmembrane segment at 215–235 threads the bilayer; it reads LILLLLQYSTEFLFHTARLFY. Topologically, residues 236 to 250 are cytoplasmic; it reads FADENNEKLFSAWAA. A helical transmembrane segment spans residues 251–271; sequence VFGVTRLFILTLAVLAIGFGL. The Extracellular portion of the chain corresponds to 272-287; the sequence is ARMENQAFDPEKGNFN. The chain crosses the membrane as a helical span at residues 288 to 308; that stretch reads TLFCRLCVLLLVCAAQAWLMW. Topologically, residues 309-370 are cytoplasmic; that stretch reads RFIHSQLRHW…SPRTKKLKSP (62 aa). Residues 348–370 are disordered; it reads YHENGVVKAENGTSPRTKKLKSP.

This sequence belongs to the TRAM family. Interacts with SERCA2B and COL1A1.

It localises to the membrane. Its function is as follows. Necessary for collagen type I synthesis. May couple the activity of the ER Ca(2+) pump SERCA2B with the activity of the translocon. This coupling may increase the local Ca(2+) concentration at the site of collagen synthesis, and a high Ca(2+) concentration may be necessary for the function of molecular chaperones involved in collagen folding. Required for proper insertion of the first transmembrane helix N-terminus of TM4SF20 into the ER lumen, may act as a ceramide sensor for regulated alternative translocation (RAT). This Homo sapiens (Human) protein is Translocating chain-associated membrane protein 2 (TRAM2).